The following is a 379-amino-acid chain: tRNA-specific 2-thiouridylase MnmA (379 aa).

Residues 9-16 (GLSGGVDS) and Met-35 each bind ATP. The tract at residues 95–97 (NPD) is interaction with target base in tRNA. Residue Cys-100 is the Nucleophile of the active site. A disulfide bond links Cys-100 and Cys-198. Gly-124 serves as a coordination point for ATP. An interaction with tRNA region spans residues 148-150 (KDQ). Catalysis depends on Cys-198, which acts as the Cysteine persulfide intermediate. The tract at residues 325–326 (RY) is interaction with tRNA.

Belongs to the MnmA/TRMU family.

The protein localises to the cytoplasm. It carries out the reaction S-sulfanyl-L-cysteinyl-[protein] + uridine(34) in tRNA + AH2 + ATP = 2-thiouridine(34) in tRNA + L-cysteinyl-[protein] + A + AMP + diphosphate + H(+). In terms of biological role, catalyzes the 2-thiolation of uridine at the wobble position (U34) of tRNA, leading to the formation of s(2)U34. The sequence is that of tRNA-specific 2-thiouridylase MnmA from Acidovorax sp. (strain JS42).